Consider the following 85-residue polypeptide: Protein RALF-like 28 (85 aa).

Residues 1–31 (MSILKETKRFMVVAMFIACVFISNNMNVAVA) form the signal peptide. 2 disulfide bridges follow: cysteine 48-cysteine 53 and cysteine 66-cysteine 72. Residues 60 to 85 (NPYHRGCEKSKRCRGPDPPALPRKMI) are disordered. A compositionally biased stretch (pro residues) spans 75 to 85 (PDPPALPRKMI).

It belongs to the plant rapid alkalinization factor (RALF) family.

It localises to the secreted. In terms of biological role, cell signaling peptide that may regulate plant stress, growth, and development. Mediates a rapid alkalinization of extracellular space by mediating a transient increase in the cytoplasmic Ca(2+) concentration leading to a calcium-dependent signaling events through a cell surface receptor and a concomitant activation of some intracellular mitogen-activated protein kinases. The polypeptide is Protein RALF-like 28 (RALFL28) (Arabidopsis thaliana (Mouse-ear cress)).